The chain runs to 338 residues: Phenylalanine--tRNA ligase alpha subunit (338 aa).

Glu252 provides a ligand contact to Mg(2+).

Belongs to the class-II aminoacyl-tRNA synthetase family. Phe-tRNA synthetase alpha subunit type 1 subfamily. As to quaternary structure, tetramer of two alpha and two beta subunits. Requires Mg(2+) as cofactor.

The protein localises to the cytoplasm. It catalyses the reaction tRNA(Phe) + L-phenylalanine + ATP = L-phenylalanyl-tRNA(Phe) + AMP + diphosphate + H(+). This is Phenylalanine--tRNA ligase alpha subunit from Pseudomonas aeruginosa (strain UCBPP-PA14).